An 89-amino-acid polypeptide reads, in one-letter code: MALLDFFLSRKKSTANIAKERLQIIVAERRRGDTEPAYLPDMKRDLLGVICKYVQIDPDMLSVQFEQKGDDISVLELNVTLPENEESPK.

Belongs to the MinE family.

Its function is as follows. Prevents the cell division inhibition by proteins MinC and MinD at internal division sites while permitting inhibition at polar sites. This ensures cell division at the proper site by restricting the formation of a division septum at the midpoint of the long axis of the cell. The protein is Cell division topological specificity factor of Proteus mirabilis (strain HI4320).